A 338-amino-acid chain; its full sequence is Probable O-antigen biosynthesis glycosyltransferase WbiN (338 aa).

Belongs to the glycosyltransferase group 1 family. Glycosyltransferase 4 subfamily.

The catalysed reaction is N-acetyl-alpha-D-galactosaminyl-di-trans,octa-cis-undecaprenyl diphosphate + UDP-N-acetyl-alpha-D-galactosamine = alpha-D-GalNAc-(1-&gt;3)-alpha-D-GalNAc-di-trans,octa-cis-undecaprenyl diphosphate + UDP + H(+). Its pathway is bacterial outer membrane biogenesis; LPS O-antigen biosynthesis. Its function is as follows. Involved in the assembly of the O-repeating unit during O-antigen biosynthesis. This Escherichia coli protein is Probable O-antigen biosynthesis glycosyltransferase WbiN.